Consider the following 515-residue polypeptide: Maturase K (515 aa).

This sequence belongs to the intron maturase 2 family. MatK subfamily.

It is found in the plastid. The protein localises to the chloroplast. Usually encoded in the trnK tRNA gene intron. Probably assists in splicing its own and other chloroplast group II introns. The protein is Maturase K of Pinus armandii (Chinese white pine).